The primary structure comprises 399 residues: Phosphoglycerate kinase (399 aa).

Substrate contacts are provided by residues 22–24, arginine 38, 61–64, arginine 120, and arginine 153; these read DFN and HLGR. ATP-binding positions include lysine 206, glycine 297, glutamate 328, and 354–357; that span reads GGDT.

It belongs to the phosphoglycerate kinase family. As to quaternary structure, monomer.

It localises to the cytoplasm. It catalyses the reaction (2R)-3-phosphoglycerate + ATP = (2R)-3-phospho-glyceroyl phosphate + ADP. It functions in the pathway carbohydrate degradation; glycolysis; pyruvate from D-glyceraldehyde 3-phosphate: step 2/5. The chain is Phosphoglycerate kinase from Campylobacter concisus (strain 13826).